The sequence spans 474 residues: Gamma-aminobutyric acid receptor subunit beta-1 (474 aa).

Positions 1–25 (MWTVQNRESLGLLSFPVMVAMVCCA) are cleaved as a signal peptide. At 26 to 245 (HSSNEPSNMS…SFRLKRNIGY (220 aa)) the chain is on the extracellular side. Residues Asn-33 and Asn-105 are each glycosylated (N-linked (GlcNAc...) asparagine). Position 122 (Tyr-122) interacts with histamine. A disulfide bond links Cys-161 and Cys-175. N-linked (GlcNAc...) asparagine glycosylation occurs at Asn-174. Residues 181–182 (SY) and Thr-227 each bind histamine. The 4-aminobutanoate site is built by Tyr-182 and Thr-227. The next 3 helical transmembrane spans lie at 246–267 (FILQTYMPSTLITILSWVSFWI), 271–293 (ASAARVALGITTVLTMTTISTHL), and 305–327 (AIDIYLMGCFVFVFLALLEYAFV). At 328–451 (NYIFFGKGPQ…DLTDVNSIDK (124 aa)) the chain is on the cytoplasmic side. A helical membrane pass occupies residues 452–473 (WSRMFFPITFSLFNVVYWLYYV).

The protein belongs to the ligand-gated ion channel (TC 1.A.9) family. Gamma-aminobutyric acid receptor (TC 1.A.9.5) subfamily. GABRB1 sub-subfamily. As to quaternary structure, heteropentamer, formed by a combination of alpha (GABRA1-6), beta (GABRB1-3), gamma (GABRG1-3), delta (GABRD), epsilon (GABRE), rho (GABRR1-3), pi (GABRP) and theta (GABRQ) chains, each subunit exhibiting distinct physiological and pharmacological properties. Binds UBQLN1.

Its subcellular location is the postsynaptic cell membrane. It localises to the cell membrane. The catalysed reaction is chloride(in) = chloride(out). With respect to regulation, potentiated by histamine. In terms of biological role, beta subunit of the heteropentameric ligand-gated chloride channel gated by gamma-aminobutyric acid (GABA), a major inhibitory neurotransmitter in the brain. GABA-gated chloride channels, also named GABA(A) receptors (GABAAR), consist of five subunits arranged around a central pore and contain GABA active binding site(s) located at the alpha and beta subunit interface(s). When activated by GABA, GABAARs selectively allow the flow of chloride anions across the cell membrane down their electrochemical gradient. Chloride influx into the postsynaptic neuron following GABAAR opening decreases the neuron ability to generate a new action potential, thereby reducing nerve transmission. Beta-containing GABAARs can simultaneously bind GABA and histamine where histamine binds at the interface of two neighboring beta subunits, which may be involved in the regulation of sleep and wakefulness. This Mus musculus (Mouse) protein is Gamma-aminobutyric acid receptor subunit beta-1.